Here is a 356-residue protein sequence, read N- to C-terminus: uncharacterized protein (356 aa).

The first 21 residues, M1–S21, serve as a signal peptide directing secretion.

This is an uncharacterized protein from Escherichia coli (strain K12).